The primary structure comprises 249 residues: MEKFDIAMTVFLVMIFLFIFLPIIYMLSNPGDLNQLLDKEVIEAFKTTLLAGAVATLIALIFGIPTGYILARYDFKFKSFVEAVLDLPMAIPHSVIGIIILSFIYGIDIINFIGRYVVDNFWGIVTVYLFVGIPFMVNSIRDGFLSVDEEIEYVSRTLGASKIRTFFEISLPLIKNNIISGIILSFARGISEVGAILIIAYYPKTVPILIYERFMSFGLDASKPISVGMILISIALFALLRMFGRMRGR.

Residues 1 to 5 (MEKFD) lie on the Cytoplasmic side of the membrane. The helical transmembrane segment at 6–26 (IAMTVFLVMIFLFIFLPIIYM) threads the bilayer. Over 27 to 48 (LSNPGDLNQLLDKEVIEAFKTT) the chain is Extracellular. Residues 45 to 240 (FKTTLLAGAV…LISIALFALL (196 aa)) form the ABC transmembrane type-1 domain. Residues 49 to 69 (LLAGAVATLIALIFGIPTGYI) form a helical membrane-spanning segment. Residues 70–93 (LARYDFKFKSFVEAVLDLPMAIPH) lie on the Cytoplasmic side of the membrane. A helical transmembrane segment spans residues 94–114 (SVIGIIILSFIYGIDIINFIG). The Extracellular segment spans residues 115-116 (RY). The chain crosses the membrane as a helical span at residues 117–137 (VVDNFWGIVTVYLFVGIPFMV). Residues 138-177 (NSIRDGFLSVDEEIEYVSRTLGASKIRTFFEISLPLIKNN) are Cytoplasmic-facing. A helical membrane pass occupies residues 178–198 (IISGIILSFARGISEVGAILI). At 199–223 (IAYYPKTVPILIYERFMSFGLDASK) the chain is on the extracellular side. The chain crosses the membrane as a helical span at residues 224 to 244 (PISVGMILISIALFALLRMFG). Residues 245 to 249 (RMRGR) lie on the Cytoplasmic side of the membrane.

It belongs to the binding-protein-dependent transport system permease family. The complex is composed of two ATP-binding proteins (WtpC), two transmembrane proteins (WtpB) and a solute-binding protein (WtpA).

The protein resides in the cell membrane. Part of the ABC transporter complex WtpABC involved in molybdate/tungstate import. Probably responsible for the translocation of the substrate across the membrane. The sequence is that of Molybdate/tungstate transport system permease protein WtpB (wtpB) from Methanocaldococcus jannaschii (strain ATCC 43067 / DSM 2661 / JAL-1 / JCM 10045 / NBRC 100440) (Methanococcus jannaschii).